The following is an 853-amino-acid chain: DNA mismatch repair protein MutS (853 aa).

614–621 (GPNMGGKS) lines the ATP pocket.

This sequence belongs to the DNA mismatch repair MutS family.

Its function is as follows. This protein is involved in the repair of mismatches in DNA. It is possible that it carries out the mismatch recognition step. This protein has a weak ATPase activity. The polypeptide is DNA mismatch repair protein MutS (Escherichia fergusonii (strain ATCC 35469 / DSM 13698 / CCUG 18766 / IAM 14443 / JCM 21226 / LMG 7866 / NBRC 102419 / NCTC 12128 / CDC 0568-73)).